A 631-amino-acid polypeptide reads, in one-letter code: Probable sulfate transporter 3.3 (631 aa).

The Cytoplasmic portion of the chain corresponds to 1 to 69 (MEVHKVVAPP…EYSFSLLKSD (69 aa)). A helical transmembrane segment spans residues 70 to 90 (VVSGLTIASLAIPQGISYAKL). Residues 91 to 92 (AN) lie on the Extracellular side of the membrane. The chain crosses the membrane as a helical span at residues 93–113 (LPPIVGLYSSFVPPLVYAVLG). At 114–117 (SSRD) the chain is on the cytoplasmic side. Residues 118 to 138 (LAVGPVSIASLILGSMLRQQV) traverse the membrane as a helical segment. The Extracellular portion of the chain corresponds to 139–144 (SPVDDP). The chain crosses the membrane as a helical span at residues 145 to 165 (VLFLQLAFSSTFFAGLFQASL). Residues 166-171 (GILRLG) lie on the Cytoplasmic side of the membrane. A helical membrane pass occupies residues 172–192 (FIIDFLSKATLIGFMGGAAII). The Extracellular portion of the chain corresponds to 193–223 (VSLQQLKGLLGITHFTKHMSVVPVLSSVFQH). A helical transmembrane segment spans residues 224 to 244 (TNEWSWQTIVMGVCFLLFLLS). The Cytoplasmic segment spans residues 245 to 256 (TRHLSMKKPKLF). The helical transmembrane segment at 257–277 (WVSAGAPLLSVIVSTLLVFVF) threads the bilayer. Topologically, residues 278-309 (RAERHGISVIGKLPEGLNPPSWNMLQFHGSHL) are extracellular. Residues 310–330 (ALVAKTGLVTGIVSLTEGIAV) form a helical membrane-spanning segment. The Cytoplasmic portion of the chain corresponds to 331 to 347 (GRTFAALKNYHVDGNKE). A helical membrane pass occupies residues 348-368 (MIAIGLMNVVGSATSCYVTTG). Residues 369–384 (AFSRSAVNNNAGAKTA) are Extracellular-facing. Residues 385–405 (VSNIVMSVTVMVTLLFLMPLF) traverse the membrane as a helical segment. Topologically, residues 406–410 (EYTPN) are cytoplasmic. A helical membrane pass occupies residues 411 to 431 (VVLGAIIVTAVIGLIDLPAAC). Residues 432 to 441 (HIWKIDKFDF) are Extracellular-facing. A helical transmembrane segment spans residues 442-462 (LVMLCAFFGVIFLSVQNGLAI). Residues 463 to 631 (AVGLSLFKIL…SLKGPSLSNV (169 aa)) are Cytoplasmic-facing. Positions 497-621 (HYKEAQRIPG…LTVAEAVASL (125 aa)) constitute an STAS domain.

This sequence belongs to the SLC26A/SulP transporter (TC 2.A.53) family. As to expression, expressed only in leaves.

It is found in the membrane. Functionally, h(+)/sulfate cotransporter that may play a role in the regulation of sulfate assimilation. This Arabidopsis thaliana (Mouse-ear cress) protein is Probable sulfate transporter 3.3 (SULTR3;3).